Reading from the N-terminus, the 365-residue chain is Embryonic developmental protein tofu-6 (365 aa).

The RRM domain maps to 13–90 (AGFHIRNVPK…YSLKVSDHKN (78 aa)).

Its function is as follows. Required maternally for early embryonic cell divisions. May have a role in DNA replication. This is Embryonic developmental protein tofu-6 from Caenorhabditis briggsae.